A 421-amino-acid polypeptide reads, in one-letter code: Medium-chain specific acyl-CoA dehydrogenase, mitochondrial (421 aa).

A mitochondrion-targeting transit peptide spans 1 to 25 (MAAAFGRCCRVLRSISRFHWRSQHT). Position 69 is an N6-acetyllysine; alternate (Lys69). Lys69 carries the N6-succinyllysine; alternate modification. Residue 158-167 (YCVTEPGAGS) coordinates FAD. Ser167 serves as a coordination point for octanoyl-CoA. Lys179 is subject to N6-succinyllysine. Residue 191-193 (WIT) coordinates FAD. An N6-acetyllysine; alternate mark is found at Lys212, Lys217, Lys259, and Lys271. An N6-succinyllysine; alternate mark is found at Lys212, Lys217, Lys259, and Lys271. Residue Asp278 participates in octanoyl-CoA binding. Lys279 bears the N6-acetyllysine mark. Position 281 (Arg281) interacts with octanoyl-CoA. Lys301 is subject to N6-acetyllysine. FAD is bound by residues 306-308 (RKT) and 316-317 (HQ). Octanoyl-CoA contacts are provided by Arg349 and Thr351. Thr351 bears the Phosphothreonine mark. Position 374–378 (374–378 (QIFGG)) interacts with FAD. Glu401 serves as a coordination point for octanoyl-CoA. Glu401 serves as the catalytic Proton acceptor. 402–405 (GTSQ) is an FAD binding site.

Belongs to the acyl-CoA dehydrogenase family. As to quaternary structure, homotetramer. Interacts with the heterodimeric electron transfer flavoprotein ETF. The cofactor is FAD. Acetylated. Could occur at proximity of the cofactor-binding sites and reduce the catalytic activity. Could be deacetylated by SIRT3.

Its subcellular location is the mitochondrion matrix. The catalysed reaction is a medium-chain 2,3-saturated fatty acyl-CoA + oxidized [electron-transfer flavoprotein] + H(+) = a medium-chain (2E)-enoyl-CoA + reduced [electron-transfer flavoprotein]. The enzyme catalyses pentanoyl-CoA + oxidized [electron-transfer flavoprotein] + H(+) = (2E)-pentenoyl-CoA + reduced [electron-transfer flavoprotein]. It catalyses the reaction hexanoyl-CoA + oxidized [electron-transfer flavoprotein] + H(+) = (2E)-hexenoyl-CoA + reduced [electron-transfer flavoprotein]. It carries out the reaction octanoyl-CoA + oxidized [electron-transfer flavoprotein] + H(+) = (2E)-octenoyl-CoA + reduced [electron-transfer flavoprotein]. The catalysed reaction is decanoyl-CoA + oxidized [electron-transfer flavoprotein] + H(+) = (2E)-decenoyl-CoA + reduced [electron-transfer flavoprotein]. The enzyme catalyses dodecanoyl-CoA + oxidized [electron-transfer flavoprotein] + H(+) = (2E)-dodecenoyl-CoA + reduced [electron-transfer flavoprotein]. It catalyses the reaction tetradecanoyl-CoA + oxidized [electron-transfer flavoprotein] + H(+) = (2E)-tetradecenoyl-CoA + reduced [electron-transfer flavoprotein]. It carries out the reaction oxidized [electron-transfer flavoprotein] + hexadecanoyl-CoA + H(+) = (2E)-hexadecenoyl-CoA + reduced [electron-transfer flavoprotein]. The protein operates within lipid metabolism; mitochondrial fatty acid beta-oxidation. In terms of biological role, medium-chain specific acyl-CoA dehydrogenase is one of the acyl-CoA dehydrogenases that catalyze the first step of mitochondrial fatty acid beta-oxidation, an aerobic process breaking down fatty acids into acetyl-CoA and allowing the production of energy from fats. The first step of fatty acid beta-oxidation consists in the removal of one hydrogen from C-2 and C-3 of the straight-chain fatty acyl-CoA thioester, resulting in the formation of trans-2-enoyl-CoA. Electron transfer flavoprotein (ETF) is the electron acceptor that transfers electrons to the main mitochondrial respiratory chain via ETF-ubiquinone oxidoreductase (ETF dehydrogenase). Among the different mitochondrial acyl-CoA dehydrogenases, medium-chain specific acyl-CoA dehydrogenase acts specifically on acyl-CoAs with saturated 6 to 12 carbons long primary chains. In Macaca fascicularis (Crab-eating macaque), this protein is Medium-chain specific acyl-CoA dehydrogenase, mitochondrial.